An 82-amino-acid chain; its full sequence is Opistoporin-1 (82 aa).

A signal peptide spans 1-22; sequence MNRKLLFVTLMVTMLVMQPSEG. Positions 67 to 82 are excised as a propeptide; that stretch reads EAGQMPFDEFMDILYE.

As to expression, expressed by the venom gland.

The protein localises to the secreted. The protein resides in the target cell membrane. At high concentrations, acts as a pore former in cellular membranes and causes the leakage of the cells. At submicromolar concentrations, degranulates granulocytes and has a weak hemolytic activity against human erythrocytes. Also strongly inhibits the production of superoxide anions. Has a strong antibacterial activity against Gram-negative bacteria but is less active against Gram-positive bacteria. Also has antifungal activity. This Opistophthalmus carinatus (African yellow leg scorpion) protein is Opistoporin-1.